A 295-amino-acid chain; its full sequence is Light-independent protochlorophyllide reductase iron-sulfur ATP-binding protein (295 aa).

Residues 10–15 (GIGKST) and Lys39 contribute to the ATP site. Ser14 serves as a coordination point for Mg(2+). The [4Fe-4S] cluster site is built by Cys95 and Cys129. 180 to 181 (NR) serves as a coordination point for ATP. Basic and acidic residues predominate over residues 275-289 (TKDKKENKKEDKENS). Residues 275–295 (TKDKKENKKEDKENSADFTWL) are disordered.

It belongs to the NifH/BchL/ChlL family. In terms of assembly, homodimer. Protochlorophyllide reductase is composed of three subunits; ChlL, ChlN and ChlB. [4Fe-4S] cluster serves as cofactor.

Its subcellular location is the plastid. The protein localises to the chloroplast. It carries out the reaction chlorophyllide a + oxidized 2[4Fe-4S]-[ferredoxin] + 2 ADP + 2 phosphate = protochlorophyllide a + reduced 2[4Fe-4S]-[ferredoxin] + 2 ATP + 2 H2O. It participates in porphyrin-containing compound metabolism; chlorophyll biosynthesis (light-independent). Component of the dark-operative protochlorophyllide reductase (DPOR) that uses Mg-ATP and reduced ferredoxin to reduce ring D of protochlorophyllide (Pchlide) to form chlorophyllide a (Chlide). This reaction is light-independent. The L component serves as a unique electron donor to the NB-component of the complex, and binds Mg-ATP. This chain is Light-independent protochlorophyllide reductase iron-sulfur ATP-binding protein, found in Physcomitrium patens (Spreading-leaved earth moss).